Here is a 495-residue protein sequence, read N- to C-terminus: Oxidoreductase AflY (495 aa).

A disordered region spans residues M1 to T22.

The protein belongs to the questin oxidase family.

Its pathway is mycotoxin biosynthesis; aflatoxin biosynthesis. Its function is as follows. Oxidoreductase; part of the gene cluster that mediates the biosynthesis of aflatoxins, a group of polyketide-derived furanocoumarins, and part of the most toxic and carcinogenic compounds among the known mycotoxins. The four major aflatoxins produced by A.parasiticus are aflatoxin B1 (AFB1), aflatoxin B2 (AFB2), aflatoxin G1 (AFG1) and aflatoxin G2 (AFG2). Within the aflatoxin pathway, the oxidoreductase aflY seems to be involved in the conversion of versicolorin A (VERA) to demethylsterigmatocystin (DMST), through probable Baeyer-Villiger oxidation required for the formation of the xanthone ring. The biosynthesis of aflatoxins begins with the norsolorinic acid synthase aflC that combines a hexanoyl starter unit produced by the fatty acid synthase aflA/aflB and 7 malonyl-CoA extender units to synthesize the precursor NOR. The second step is the conversion of NOR to averantin and requires the norsolorinic acid ketoreductase aflD, which catalyzes the dehydration of norsolorinic acid to form (1'S)-averantin. The norsolorinic acid reductases aflE and aflF may also play a role in the conversion of NOR to AVN. The cytochrome P450 monooxygenase aflG then catalyzes the hydroxylation of AVN to 5'hydroxyaverantin (HAVN). The next step is performed by the 5'-hydroxyaverantin dehydrogenase aflH that transforms HAVN to 5'-oxoaverantin (OAVN) which is further converted to averufin (AVF) by aflK that plays a dual role in the pathway, as a 5'-oxoaverantin cyclase that mediates conversion of 5'-oxoaverantin, as well as a versicolorin B synthase in a later step in the pathway. The averufin oxidase aflI catalyzes the conversion of AVF to versiconal hemiacetal acetate (VHA). VHA is then the substrate for the versiconal hemiacetal acetate esterase aflJ to yield versiconal (VAL). Versicolorin B synthase aflK then converts VAL to versicolorin B (VERB) by closing the bisfuran ring of aflatoxin which is required for DNA-binding, thus giving to aflatoxin its activity as a mutagen. Then, the activity of the versicolorin B desaturase aflL leads to versicolorin A (VERA). A branch point starts from VERB since it can also be converted to dihydrodemethylsterigmatocystin (DMDHST), probably also by aflL, VERA being a precursor for aflatoxins B1 and G1, and DMDHST for aflatoxins B2 and G2. Next, the versicolorin reductase aflM and the cytochrome P450 monooxygenase aflN are involved in conversion of VERA to demethylsterigmatocystin (DMST). AflX and aflY seem also involved in this step, through probable aflX-mediated epoxide ring-opening step following versicolorin A oxidation and aflY-mediated Baeyer-Villiger oxidation required for the formation of the xanthone ring. The methyltransferase aflO then leads to the modification of DMST to sterigmatocystin (ST), and of DMDHST to dihydrosterigmatocystin (DHST). Both ST and DHST are then substrates of the O-methyltransferase aflP to yield O-methylsterigmatocystin (OMST) and dihydro-O-methylsterigmatocystin (DHOMST), respectively. Finally OMST is converted to aflatoxins B1 and G1, and DHOMST to aflatoxins B2 and G2, via the action of several enzymes including O-methylsterigmatocystin oxidoreductase aflQ, the cytochrome P450 monooxygenase aflU, but also the NADH-dependent flavin oxidoreductase nadA which is specifically required for the synthesis of AFG1. The chain is Oxidoreductase AflY from Aspergillus parasiticus (strain ATCC 56775 / NRRL 5862 / SRRC 143 / SU-1).